The primary structure comprises 365 residues: Poly(rC)-binding protein 2 (365 aa).

2 KH domains span residues 13 to 75 (TLTI…FAMI) and 97 to 162 (PVTL…VKQI). Lysine 115 is covalently cross-linked (Glycyl lysine isopeptide (Lys-Gly) (interchain with G-Cter in SUMO2)). Phosphoserine is present on serine 173. A Glycyl lysine isopeptide (Lys-Gly) (interchain with G-Cter in SUMO2) cross-link involves residue lysine 185. Serine 189 and serine 272 each carry phosphoserine. The KH 3 domain occupies 287–351 (TTSHELTIPN…ASISLAQYLI (65 aa)). Lysine 322 is covalently cross-linked (Glycyl lysine isopeptide (Lys-Gly) (interchain with G-Cter in SUMO2)). Phosphoserine is present on residues serine 364 and serine 365.

Identified in a mRNP complex, at least composed of DHX9, DDX3X, ELAVL1, HNRNPU, IGF2BP1, ILF3, PABPC1, PCBP2, PTBP2, STAU1, STAU2, SYNCRIP and YBX1. Interacts with IFIH1 and RNF135. Interacts with MAVS (via C-terminus) and ITCH (via WW domains). Interacts with CGAS; preventing the formation of liquid-like droplets in which CGAS is activated. In terms of processing, phosphorylated. The non-phosphorylated form(s) exhibited the strongest poly(rC)-binding activity. Post-translationally, (Microbial infection) Proteolytically cleaved by picornavirus proteinase 3CD. As to expression, detected in all tissues examined.

Its subcellular location is the nucleus. It is found in the cytoplasm. Single-stranded nucleic acid binding protein that binds preferentially to oligo dC. Major cellular poly(rC)-binding protein. Also binds poly(rU). Acts as a negative regulator of antiviral signaling. Negatively regulates cellular antiviral responses mediated by MAVS signaling. It acts as an adapter between MAVS and the E3 ubiquitin ligase ITCH, therefore triggering MAVS ubiquitination and degradation. Negativeley regulates the cGAS-STING pathway via interaction with CGAS, preventing the formation of liquid-like droplets in which CGAS is activated. Together with PCBP1, required for erythropoiesis, possibly by regulating mRNA splicing. Functionally, (Microbial infection) In case of infection by poliovirus, binds to the viral internal ribosome entry site (IRES) and stimulates the IRES-mediated translation. Also plays a role in initiation of viral RNA replication in concert with the viral protein 3CD. The sequence is that of Poly(rC)-binding protein 2 from Homo sapiens (Human).